The following is a 586-amino-acid chain: Phosphomethylpyrimidine synthase (586 aa).

The tract at residues 1 to 58 is disordered; that stretch reads MKQSVSAEQIELKSSLPGSKKVYVDGPREGMKVPMREIEQSDTNGVPNPPIRVYDTSG. The span at 22-39 shows a compositional bias: basic and acidic residues; that stretch reads VYVDGPREGMKVPMREIE. Substrate-binding positions include Asn-193, Met-222, Tyr-251, His-287, 307-309, 348-351, and Glu-387; these read SRG and DGLR. Zn(2+) is bound at residue His-391. A substrate-binding site is contributed by Tyr-414. A Zn(2+)-binding site is contributed by His-455. The [4Fe-4S] cluster site is built by Cys-535, Cys-538, and Cys-543.

The protein belongs to the ThiC family. [4Fe-4S] cluster serves as cofactor.

The catalysed reaction is 5-amino-1-(5-phospho-beta-D-ribosyl)imidazole + S-adenosyl-L-methionine = 4-amino-2-methyl-5-(phosphooxymethyl)pyrimidine + CO + 5'-deoxyadenosine + formate + L-methionine + 3 H(+). Its pathway is cofactor biosynthesis; thiamine diphosphate biosynthesis. Functionally, catalyzes the synthesis of the hydroxymethylpyrimidine phosphate (HMP-P) moiety of thiamine from aminoimidazole ribotide (AIR) in a radical S-adenosyl-L-methionine (SAM)-dependent reaction. In Bacillus thuringiensis (strain Al Hakam), this protein is Phosphomethylpyrimidine synthase.